An 885-amino-acid polypeptide reads, in one-letter code: Alanine--tRNA ligase (885 aa).

Histidine 574, histidine 578, cysteine 685, and histidine 689 together coordinate Zn(2+).

The protein belongs to the class-II aminoacyl-tRNA synthetase family. Zn(2+) serves as cofactor.

It is found in the cytoplasm. The catalysed reaction is tRNA(Ala) + L-alanine + ATP = L-alanyl-tRNA(Ala) + AMP + diphosphate. In terms of biological role, catalyzes the attachment of alanine to tRNA(Ala) in a two-step reaction: alanine is first activated by ATP to form Ala-AMP and then transferred to the acceptor end of tRNA(Ala). Also edits incorrectly charged Ser-tRNA(Ala) and Gly-tRNA(Ala) via its editing domain. This is Alanine--tRNA ligase from Deinococcus geothermalis (strain DSM 11300 / CIP 105573 / AG-3a).